The sequence spans 222 residues: uncharacterized protein (222 aa).

Asn4, Asn75, Asn84, Asn104, Asn170, and Asn175 each carry an N-linked (GlcNAc...) asparagine; by host glycan. Residues 200–220 (LIIIIGIVIILLLIIVMIKTV) form a helical membrane-spanning segment.

The protein localises to the membrane. This is an uncharacterized protein from Acanthamoeba polyphaga (Amoeba).